A 167-amino-acid chain; its full sequence is Lipoprotein signal peptidase (167 aa).

The next 4 membrane-spanning stretches (helical) occupy residues 5–25 (ICSTGLRWLWLVVVVLILDLG), 42–62 (LIPYFNLTYAQNFGAAFSFLA), 70–90 (WFFAFIAVAISVVLMVMMYRA), and 102–122 (ALIIGGALGNLFDRLVHGFVI). Catalysis depends on residues D123 and D141. A helical transmembrane segment spans residues 137 to 157 (FNIADMAICIGAGLVIIDSFL).

It belongs to the peptidase A8 family.

It localises to the cell inner membrane. It catalyses the reaction Release of signal peptides from bacterial membrane prolipoproteins. Hydrolyzes -Xaa-Yaa-Zaa-|-(S,diacylglyceryl)Cys-, in which Xaa is hydrophobic (preferably Leu), and Yaa (Ala or Ser) and Zaa (Gly or Ala) have small, neutral side chains.. The protein operates within protein modification; lipoprotein biosynthesis (signal peptide cleavage). Functionally, this protein specifically catalyzes the removal of signal peptides from prolipoproteins. The sequence is that of Lipoprotein signal peptidase from Photorhabdus laumondii subsp. laumondii (strain DSM 15139 / CIP 105565 / TT01) (Photorhabdus luminescens subsp. laumondii).